The primary structure comprises 258 residues: Imidazole glycerol phosphate synthase subunit HisF (258 aa).

Residues aspartate 12 and aspartate 131 contribute to the active site.

The protein belongs to the HisA/HisF family. Heterodimer of HisH and HisF.

It is found in the cytoplasm. It catalyses the reaction 5-[(5-phospho-1-deoxy-D-ribulos-1-ylimino)methylamino]-1-(5-phospho-beta-D-ribosyl)imidazole-4-carboxamide + L-glutamine = D-erythro-1-(imidazol-4-yl)glycerol 3-phosphate + 5-amino-1-(5-phospho-beta-D-ribosyl)imidazole-4-carboxamide + L-glutamate + H(+). The protein operates within amino-acid biosynthesis; L-histidine biosynthesis; L-histidine from 5-phospho-alpha-D-ribose 1-diphosphate: step 5/9. In terms of biological role, IGPS catalyzes the conversion of PRFAR and glutamine to IGP, AICAR and glutamate. The HisF subunit catalyzes the cyclization activity that produces IGP and AICAR from PRFAR using the ammonia provided by the HisH subunit. The sequence is that of Imidazole glycerol phosphate synthase subunit HisF from Paenarthrobacter aurescens (strain TC1).